Reading from the N-terminus, the 306-residue chain is Probable L,D-transpeptidase YbiS (306 aa).

Residues 1 to 24 (MNMKLKTLFAAAFAVVGFCSTASA) form the signal peptide. The region spanning 99 to 234 (EGIVINSAEM…VPVGTRVQFI (136 aa)) is the L,D-TPase catalytic domain. His-194 acts as the Proton donor/acceptor in catalysis. The Nucleophile role is filled by Cys-210.

The protein belongs to the YkuD family.

The protein localises to the periplasm. It functions in the pathway cell wall biogenesis; peptidoglycan biosynthesis. Its function is as follows. Responsible, at least in part, for anchoring of the major outer membrane lipoprotein (Lpp) to the peptidoglycan via a meso-diaminopimelyl-L-Lys- bond on the terminal residue of Lpp. The sequence is that of Probable L,D-transpeptidase YbiS (ybiS) from Escherichia coli O6:H1 (strain CFT073 / ATCC 700928 / UPEC).